We begin with the raw amino-acid sequence, 326 residues long: Vacuolar protein sorting-associated protein 26A-B (326 aa).

This sequence belongs to the VPS26 family. Component of the heterotrimeric retromer cargo-selective complex (CSC) which is believed to associate with variable sorting nexins to form functionally distinct retromer complex variants.

It is found in the cytoplasm. Its subcellular location is the endosome membrane. It localises to the early endosome. Functionally, acts as a component of the retromer cargo-selective complex (CSC). The CSC is believed to be the core functional component of retromer or respective retromer complex variants acting to prevent missorting of selected transmembrane cargo proteins into the lysosomal degradation pathway. Retromer mediates retrograde transport of cargo proteins from endosomes to the trans-Golgi network (TGN). This Xenopus laevis (African clawed frog) protein is Vacuolar protein sorting-associated protein 26A-B (vps26a-b).